The chain runs to 333 residues: Cell division protein ZipA (333 aa).

The Periplasmic portion of the chain corresponds to 1–5 (MQELR). Residues 6–26 (LVLILVGALAIAALLFHGLWT) traverse the membrane as a helical segment. At 27 to 333 (SRKETSSKFG…KQRVKVFCRK (307 aa)) the chain is on the cytoplasmic side. Residues 72–81 (KEPAFAREEV) are compositionally biased toward basic and acidic residues. Residues 72 to 119 (KEPAFAREEVPTSDDPLFEGTVSSESNKFTQQEKPTVQQAQPQPQPQP) are disordered. Positions 92–107 (TVSSESNKFTQQEKPT) are enriched in polar residues. Residues 108–119 (VQQAQPQPQPQP) are compositionally biased toward low complexity.

This sequence belongs to the ZipA family. As to quaternary structure, interacts with FtsZ via their C-terminal domains.

The protein resides in the cell inner membrane. Its function is as follows. Essential cell division protein that stabilizes the FtsZ protofilaments by cross-linking them and that serves as a cytoplasmic membrane anchor for the Z ring. Also required for the recruitment to the septal ring of downstream cell division proteins. The polypeptide is Cell division protein ZipA (Aliivibrio fischeri (strain ATCC 700601 / ES114) (Vibrio fischeri)).